A 130-amino-acid polypeptide reads, in one-letter code: Fluoride-specific ion channel FluC (130 aa).

Transmembrane regions (helical) follow at residues 3 to 23 (FVFL…YFVG), 38 to 58 (LGTF…GHLA), 67 to 87 (FGIF…SYGL), and 102 to 122 (ISYV…GWFL). 2 residues coordinate Na(+): Gly77 and Thr80.

The protein belongs to the fluoride channel Fluc/FEX (TC 1.A.43) family.

Its subcellular location is the cell inner membrane. It catalyses the reaction fluoride(in) = fluoride(out). With respect to regulation, na(+) is not transported, but it plays an essential structural role and its presence is essential for fluoride channel function. Functionally, fluoride-specific ion channel. Important for reducing fluoride concentration in the cell, thus reducing its toxicity. The chain is Fluoride-specific ion channel FluC from Helicobacter pylori (strain G27).